The chain runs to 226 residues: tRNA (guanine-N(7)-)-methyltransferase (226 aa).

3 residues coordinate S-adenosyl-L-methionine: aspartate 59, glutamate 84, and aspartate 111. Aspartate 169 contacts substrate.

This sequence belongs to the class I-like SAM-binding methyltransferase superfamily. TrmB family.

It carries out the reaction guanosine(46) in tRNA + S-adenosyl-L-methionine = N(7)-methylguanosine(46) in tRNA + S-adenosyl-L-homocysteine. Its pathway is tRNA modification; N(7)-methylguanine-tRNA biosynthesis. Catalyzes the formation of N(7)-methylguanine at position 46 (m7G46) in tRNA. The chain is tRNA (guanine-N(7)-)-methyltransferase from Chloroherpeton thalassium (strain ATCC 35110 / GB-78).